Consider the following 502-residue polypeptide: Ubiquitin-like-specific protease 1A (502 aa).

Catalysis depends on residues His-393, Asp-410, and Cys-461.

This sequence belongs to the peptidase C48 family.

Functionally, protease that catalyzes two essential functions in the SUMO pathway: processing of full-length SUMOs to their mature forms and deconjugation of SUMO from targeted proteins. Cleaves precursors of SUM1 and SUM2, and very inefficiently of SUM3. Seems to be the only ULP1 able to cleave SUM3 precursors. Cleaves SUMO peptides better than SUMO-conjugated proteins. This is Ubiquitin-like-specific protease 1A (ULP1A) from Arabidopsis thaliana (Mouse-ear cress).